A 570-amino-acid polypeptide reads, in one-letter code: Frizzled-2 (570 aa).

Residues 1–28 form the signal peptide; that stretch reads MRARSALPRSALPRLLLPLLLLPAAGPA. The Extracellular portion of the chain corresponds to 29 to 252; sequence QFHGEKGISI…HHHTRFARLW (224 aa). Positions 39-158 constitute an FZ domain; the sequence is PDHGFCQPIS…HGAEQICVGQ (120 aa). Disulfide bonds link C44-C105, C52-C98, C89-C126, C115-C155, and C119-C143. N-linked (GlcNAc...) asparagine glycosylation is present at N58. The N-linked (GlcNAc...) asparagine glycan is linked to N159. Residues 166–194 are disordered; it reads PALLTTAPPSGLQPGAGGTPGGPGGGGAP. Over residues 179–193 the composition is skewed to gly residues; it reads PGAGGTPGGPGGGGA. A helical transmembrane segment spans residues 253–273; it reads ILTWSVLCCASTFFTVTTSLV. Topologically, residues 274–284 are cytoplasmic; the sequence is AMQRFRYPERP. The chain crosses the membrane as a helical span at residues 285 to 305; it reads IIFLSGCYTMVSVAYIAGFVL. The Extracellular segment spans residues 306–332; the sequence is QERVVCNERFSEDGYRTVGQGTKKEGC. Residues 333–353 traverse the membrane as a helical segment; the sequence is TILFMMLYFFSMASSIWWVIL. Topologically, residues 354–375 are cytoplasmic; it reads SLTWFLAAGMKWGHAAIEANSQ. The chain crosses the membrane as a helical span at residues 376-396; the sequence is YFHLAAWAVPAVKTITILAMG. At 397–419 the chain is on the extracellular side; that stretch reads QIDGDLLSGVCFVGLNRLDPLRG. A helical membrane pass occupies residues 420 to 440; the sequence is FVLAPLFVYLFIGTSFLLAGF. Residues 441-466 are Cytoplasmic-facing; it reads VSLFRIRTIMKHDGTKTEPLERLMVR. The helical transmembrane segment at 467–487 threads the bilayer; sequence IGVFSVLYTVPATIVIACYFY. Topologically, residues 488 to 524 are extracellular; sequence EQAFREHWERSWVSQHCKSLAIPCPAHYTPRTSPDFT. Residues 525–545 traverse the membrane as a helical segment; sequence VYMIKYLMTLIVGITSGFWIW. At 546 to 570 the chain is on the cytoplasmic side; it reads SGKTLHSWRKFYTRLTNSRHGETTV. The short motif at 548-553 is the Lys-Thr-X-X-X-Trp motif, mediates interaction with the PDZ domain of Dvl family members element; that stretch reads KTLHSW. Positions 568–570 match the PDZ-binding motif; the sequence is TTV.

The protein belongs to the G-protein coupled receptor Fz/Smo family. In terms of processing, ubiquitinated by ZNRF3, leading to its degradation by the proteasome. In terms of tissue distribution, widely expressed. Most abundant in kidney, liver, uterus, ovary and heart. Lower levels seen in brain and intestine. Extremely low in calvaria, mammary glands and testis.

The protein localises to the membrane. It is found in the cell membrane. In terms of biological role, receptor for Wnt proteins. Most of frizzled receptors are coupled to the beta-catenin canonical signaling pathway, which leads to the activation of disheveled proteins, inhibition of GSK-3 kinase, nuclear accumulation of beta-catenin and activation of Wnt target genes. A second signaling pathway involving PKC and calcium fluxes has been seen for some family members, but it is not yet clear if it represents a distinct pathway or if it can be integrated in the canonical pathway, as PKC seems to be required for Wnt-mediated inactivation of GSK-3 kinase. Both pathways seem to involve interactions with G-proteins. May be involved in transduction and intercellular transmission of polarity information during tissue morphogenesis and/or in differentiated tissues. Activation by Wnt5A stimulates PKC activity via a G-protein-dependent mechanism. The chain is Frizzled-2 (Fzd2) from Rattus norvegicus (Rat).